A 397-amino-acid polypeptide reads, in one-letter code: Cystinosin (397 aa).

The first 24 residues, 1–24 (MDFSTHRLTTLLLLLLATVALGNA), serve as a signal peptide directing secretion. Residues 25-126 (QSSQLTVDSH…FVRVTVAKSR (102 aa)) lie on the Lumenal side of the membrane. N-linked (GlcNAc...) asparagine glycosylation is found at Asn-43 and Asn-86. A helical transmembrane segment spans residues 127–147 (ALIYTSIIFGWVYFVAWSVSF). Positions 132–187 (SIIFGWVYFVAWSVSFYPQIWSNYRRKSVEGLNFDFLALNIVGFTLYSMFNCGLYF) constitute a PQ-loop 1 domain. Residues 148–167 (YPQIWSNYRRKSVEGLNFDF) lie on the Cytoplasmic side of the membrane. The chain crosses the membrane as a helical span at residues 168 to 188 (LALNIVGFTLYSMFNCGLYFI). At 189–210 (EDLQNEYEVRYPLGVNPVMLND) the chain is on the lumenal side. Residues 211–231 (VVFSLHAMFATCITILQCFFY) traverse the membrane as a helical segment. At 232–239 (QRAQQRVS) the chain is on the cytoplasmic side. A helical membrane pass occupies residues 240–260 (FIAYGILAIFAVVVVVSAGLA). The Lumenal portion of the chain corresponds to 261–263 (GGS). The helical transmembrane segment at 264–284 (VIHWLDFLYYCSYVKLTITII) threads the bilayer. Residues 271-327 (LYYCSYVKLTITIIKYVPQALMNYRRKSTSGWSIGNILLDFTGGTLSMLQMILNAHN) form the PQ-loop 2 domain. Over 285-302 (KYVPQALMNYRRKSTSGW) the chain is Cytoplasmic. The helical transmembrane segment at 303 to 323 (SIGNILLDFTGGTLSMLQMIL) threads the bilayer. Residues 324–340 (NAHNYDDWVSIFGDPTK) lie on the Lumenal side of the membrane. A helical membrane pass occupies residues 341–361 (FGLGLFSVLFDVFFMLQHYVF). Over 362–397 (YRHSRESSSSDLTTVTDVQNRTNESPPPSEVTTEKY) the chain is Cytoplasmic. Positions 373–385 (LTTVTDVQNRTNE) are enriched in polar residues. Residues 373–397 (LTTVTDVQNRTNESPPPSEVTTEKY) are disordered.

The protein belongs to the cystinosin family.

The protein localises to the lysosome membrane. The enzyme catalyses L-cystine(out) + H(+)(out) = L-cystine(in) + H(+)(in). Its function is as follows. Cystine/H(+) symporter that mediates export of cystine, the oxidized dimer of cysteine, from lysosomes. Involved in cysteine homeostasis during periods of fasting, which indirectly regulates mTORC1-mediated signaling by supporting de novo CoA synthesis, the TCA cycle and amino acid metabolism during periods of food shortage. Important for maintaining autophagy, and for development and survival during periods of fasting. In Drosophila melanogaster (Fruit fly), this protein is Cystinosin.